The primary structure comprises 377 residues: Nitric oxide reductase FlRd-NAD(+) reductase (377 aa).

This sequence belongs to the FAD-dependent oxidoreductase family. Requires FAD as cofactor.

It is found in the cytoplasm. The enzyme catalyses 2 reduced [nitric oxide reductase rubredoxin domain] + NAD(+) + H(+) = 2 oxidized [nitric oxide reductase rubredoxin domain] + NADH. It participates in nitrogen metabolism; nitric oxide reduction. Functionally, one of at least two accessory proteins for anaerobic nitric oxide (NO) reductase. Reduces the rubredoxin moiety of NO reductase. In Escherichia coli (strain SE11), this protein is Nitric oxide reductase FlRd-NAD(+) reductase.